The chain runs to 503 residues: MNQKKLSLFGFFALTASMVLTVYEYPTFATSKLHLVFFLLLGGLLWFLPVALCAAEMATVEGWKNGGIFSWVSQTLGERFGFAAIFFQWFQITVGFVTMIYFILGALSYVLNFQALNTDPLIKFIGLLIIFWGLTFSQLGGTQRTAKLVKAGFVVGIVIPSVILFGLAAAYFIGGNPIEIPINSHAFVPDFSQVSTLVVFVSFILAYMGVEASASHINELENPKRNYPLAMILLVILAISLDAIGGFSVAAVIPQKELSLSAGVIQTFQTLILHFNHHLGWLVKVIALMIAFGVMGEVSSWVVGPSRGMFAAAQRGLLPKFLRKTNTHEVPVPLVMIQGIIVTLWGAVLTFGGGGNNLSFLVAISLTVVIYLVGYLLFFIVYFVLIYKKQNLKRTYNVPGKIIGKTIIAGIGFLLSIFALFISFVPPASIAKNETHTYQMILLISFVVTAILPFIIYELHDKKGHDTIEEPTHFKAGDVNPAIYPAARGEHHIIKKEEHILKH.

Position 33–43 (33–43) interacts with L-glutamate; the sequence is LHLVFFLLLGG. 7 helical membrane passes run 35–55, 153–173, 194–214, 232–252, 366–386, 407–427, and 440–460; these read LVFF…LCAA, FVVG…AYFI, VSTL…EASA, ILLV…VAAV, LTVV…FVLI, IIAG…FVPP, and MILL…YELH.

It belongs to the amino acid-polyamine-organocation (APC) superfamily. Glutamate:GABA antiporter (GGA) (TC 2.A.3.7) family.

Its subcellular location is the cell membrane. The catalysed reaction is 4-aminobutanoate(in) + L-glutamate(out) = 4-aminobutanoate(out) + L-glutamate(in). In terms of biological role, involved in glutaminase-dependent acid resistance. Exchanges extracellular glutamate (Glu) for intracellular gamma-aminobutyric acid (GABA) under acidic conditions. In Lactococcus lactis subsp. cremoris (strain MG1363), this protein is Glutamate/gamma-aminobutyrate antiporter.